The sequence spans 107 residues: Dispanin subfamily A member 2b (107 aa).

The Extracellular portion of the chain corresponds to 1-31; that stretch reads MEYRTDQVPMSPRSVQGAPGTLPIRDHLPWS. A helical transmembrane segment spans residues 32-52; that stretch reads IFNLFYMNVCCLGLTAMIFSV. 2 S-palmitoyl cysteine lipidation sites follow: Cys41 and Cys42. Over 53 to 77 the chain is Cytoplasmic; sequence KSRDRKVVGDVEGARHYGSTARSLN. The chain crosses the membrane as a helical span at residues 78 to 98; sequence IAATVLGILLIIILIGLAATG. Over 99 to 107 the chain is Extracellular; it reads TIQALKYKG.

Belongs to the CD225/Dispanin family. As to expression, expressed various cell types in torpedo electric organ and muscle, especially fibroblasts, capillary endothelial cells, and axonal cuff cells.

It is found in the cell membrane. This Torpedo marmorata (Marbled electric ray) protein is Dispanin subfamily A member 2b.